The chain runs to 701 residues: Dynein axonemal intermediate chain 1 (701 aa).

Disordered regions lie at residues M1–P45 and E119–A165. Phosphoserine is present on residues S124 and S127. A compositionally biased stretch (acidic residues) spans E136 to A155. WD repeat units lie at residues S382 to C422, K431 to I474, A539 to I579, D581 to I621, and K629 to P668.

It belongs to the dynein intermediate chain family. Consists of at least two heavy chains and a number of intermediate and light chains. Interacts with BICD2. Interacts with CFAP45 and CFAP52. Interacts with CFAP53.

The protein localises to the cytoplasm. Its subcellular location is the cytoskeleton. It localises to the cilium axoneme. In terms of biological role, part of the dynein complex of respiratory cilia. In Mus musculus (Mouse), this protein is Dynein axonemal intermediate chain 1 (Dnai1).